The chain runs to 353 residues: WD repeat-containing protein 55 (353 aa).

7 WD repeats span residues 4–43 (DLGA…SLVR), 49–88 (AHKE…QVAH), 92–130 (AHED…CSHE), 133–172 (AHED…VQSQ), 175–214 (FSED…DCSD), 218–257 (DLAP…IIQP), and 260–299 (SHDY…EGSN). A disordered region spans residues 300-353 (VNSGNASGAAEDSDSDNDGMDLDNDPSKSSKGSKRKTKSKANTLNATNNFFADL). Residues 310–323 (EDSDSDNDGMDLDN) are compositionally biased toward acidic residues. Over residues 339-353 (KANTLNATNNFFADL) the composition is skewed to low complexity.

The protein belongs to the WD repeat WDR55 family. In terms of assembly, interacts with DDB1A. As to expression, highly expressed in roots. Expressed in cotyledons, leaves, buds and flowers.

It is found in the nucleus. It localises to the cytoplasm. Required for male and female gametogenesis, seed development, and embryo and endosperm development at early stages. Involved in the establishment of bilateral symmetry in the transition from the globular to the heart embryo stage. May act in the frame of a CRL4 complex. Required for proper vegetative growth and organization of the adult plant body. May play a role in hormonal control of plant development. In Arabidopsis thaliana (Mouse-ear cress), this protein is WD repeat-containing protein 55.